A 1231-amino-acid chain; its full sequence is Multifunctional 2-oxoglutarate metabolism enzyme (1231 aa).

Residues 1-41 (MANISSPFGQNEWLVEEMYRKFRDDPSSVDPSWHEFLVDYS) are 2-oxoglutarate dehydrogenase E1, N-terminal part. The tract at residues 38–79 (VDYSPEPTSQPAAEPTRVTSPLVAERAAAAAPQAPPKPADTA) is disordered. A linker region spans residues 42–88 (PEPTSQPAAEPTRVTSPLVAERAAAAAPQAPPKPADTAAAGNGVVAA). Low complexity predominate over residues 58–69 (PLVAERAAAAAP). The segment at 89–337 (LAAKTAVPPP…LRTIHELLLS (249 aa)) is succinyltransferase E2. The active-site Proton acceptor; for succinyltransferase activity is His316. The tract at residues 338-1231 (DGFWDEVFRE…QQEILDEAFG (894 aa)) is 2-oxoglutarate dehydrogenase E1, C-terminal part. Residue Arg542 participates in thiamine diphosphate binding. 2-oxoglutarate-binding residues include His581 and Ser606. Residues Ser606, Leu608, Asp649, Ala650, Ala651, and Asn682 each contribute to the thiamine diphosphate site. Asp649 is a Mg(2+) binding site. Mg(2+) is bound by residues Asn682 and Ile684. Residues 787 to 817 (DISMKEAEDALRDYQGQLERVFNEVRELEKH) are a coiled coil. A 2-oxoglutarate-binding site is contributed by His1024. 7 residues coordinate acetyl-CoA: Thr1042, Arg1058, Lys1093, Ser1096, Gln1146, Arg1153, and Arg1154.

It belongs to the 2-oxoacid dehydrogenase family. Kgd subfamily. As to quaternary structure, homodimer. The 2-oxoglutarate dehydrogenase (ODH) complex contains multiple copies of three enzymatic components: 2-oxoglutarate dehydrogenase (E1), dihydrolipoamide succinyltransferase (E2) and lipoamide dehydrogenase (E3). It depends on Mg(2+) as a cofactor. Thiamine diphosphate serves as cofactor.

The enzyme catalyses glyoxylate + 2-oxoglutarate + H(+) = 2-hydroxy-3-oxoadipate + CO2. It carries out the reaction 2-oxoglutarate + H(+) = succinate semialdehyde + CO2. The catalysed reaction is N(6)-[(R)-lipoyl]-L-lysyl-[protein] + 2-oxoglutarate + H(+) = N(6)-[(R)-S(8)-succinyldihydrolipoyl]-L-lysyl-[protein] + CO2. It catalyses the reaction N(6)-[(R)-dihydrolipoyl]-L-lysyl-[protein] + succinyl-CoA = N(6)-[(R)-S(8)-succinyldihydrolipoyl]-L-lysyl-[protein] + CoA. It functions in the pathway carbohydrate metabolism; tricarboxylic acid cycle; succinate from 2-oxoglutarate (transferase route): step 1/2. It participates in carbohydrate metabolism; tricarboxylic acid cycle; succinyl-CoA from 2-oxoglutarate (dehydrogenase route): step 1/1. Alpha-ketoglutarate dehydrogenase and decarboxylase activities are inhibited by unphosphorylated GarA, and allosterically activated by acetyl-CoA, the main substrate of the TCA cycle. Shows three enzymatic activities that share a first common step, the attack of thiamine-PP on 2-oxoglutarate (alpha-ketoglutarate, KG), leading to the formation of an enamine-thiamine-PP intermediate upon decarboxylation. Thus, displays KGD activity, catalyzing the decarboxylation from five-carbon 2-oxoglutarate to four-carbon succinate semialdehyde (SSA). Also catalyzes C-C bond formation between the activated aldehyde formed after decarboxylation of alpha-ketoglutarate and the carbonyl of glyoxylate (GLX), to yield 2-hydroxy-3-oxoadipate (HOA), which spontaneously decarboxylates to form 5-hydroxylevulinate (HLA). And is also a component of the 2-oxoglutarate dehydrogenase (ODH) complex, that catalyzes the overall conversion of 2-oxoglutarate to succinyl-CoA and CO(2). The KG decarboxylase and KG dehydrogenase reactions provide two alternative, tightly regulated, pathways connecting the oxidative and reductive branches of the TCA cycle. This is Multifunctional 2-oxoglutarate metabolism enzyme (kgd) from Mycobacterium tuberculosis (strain ATCC 25177 / H37Ra).